The chain runs to 457 residues: Elongation factor 1-alpha (457 aa).

At Gly-2 the chain carries N,N,N-trimethylglycine. The residue at position 3 (Lys-3) is an N6,N6-dimethyllysine; alternate. Lys-3 is modified (N6-methyllysine; alternate). The region spanning 5–240 (KTHVNVVVIG…DAIEPPVRPS (236 aa)) is the tr-type G domain. A G1 region spans residues 14–21 (GHVDSGKS). 14-21 (GHVDSGKS) is a binding site for GTP. Lys-30 bears the N6-methyllysine mark. The interval 70–74 (GITID) is G2. Position 79 is an N6,N6,N6-trimethyllysine (Lys-79). Residues 91 to 94 (DAPG) form a G3 region. GTP is bound by residues 91–95 (DAPGH) and 153–156 (NKMD). Residues 153–156 (NKMD) are G4. The interval 192 to 194 (SGW) is G5. At Lys-316 the chain carries N6,N6-dimethyllysine; alternate. Lys-316 bears the N6-methyllysine; alternate mark. Lys-389 is modified (N6-methyllysine).

The protein belongs to the TRAFAC class translation factor GTPase superfamily. Classic translation factor GTPase family. EF-Tu/EF-1A subfamily.

The protein localises to the cytoplasm. Functionally, this protein promotes the GTP-dependent binding of aminoacyl-tRNA to the A-site of ribosomes during protein biosynthesis. This chain is Elongation factor 1-alpha (TEF-3), found in Mucor circinelloides f. lusitanicus (Mucor racemosus var. lusitanicus).